The chain runs to 918 residues: Hexokinase-1 (918 aa).

M1 is subject to N-acetylmethionine. The interval 1-10 is mitochondrial-binding peptide (MBP); it reads MIAAQLLAYY. Hexokinase domains are found at residues 16–458 and 464–906; these read DDQV…MVTA and AEQH…LITA. ATP-binding positions include R30 and 84–89; that span reads DLGGSS. Positions 73-207 are hexokinase small subdomain 1; it reads DGSEKGDFIA…DYDANIVAVV (135 aa). Residue 84-91 participates in D-glucose 6-phosphate binding; sequence DLGGSSFR. D-glucose-binding positions include S155, 172–173, and 208–209; these read TK and ND. A hexokinase large subdomain 1 region spans residues 208–447; that stretch reads NDTVGTMIDC…SDVRFLLSES (240 aa). Residues D209 and T232 each coordinate D-glucose 6-phosphate. Residues N235, E260, and 291 to 294 contribute to the D-glucose site; that span reads QRFE. S337 bears the Phosphoserine mark. 413–415 contributes to the D-glucose 6-phosphate binding site; sequence DGS. ATP is bound by residues 425-426 and 532-537; these read RR and DLGGTN. The hexokinase small subdomain 2 stretch occupies residues 521-655; that stretch reads DGTEDGDFLA…EFDLDVVAVV (135 aa). Residue 532–536 coordinates D-glucose 6-phosphate; the sequence is DLGGT. Residues 603-604, 620-621, and 656-657 contribute to the D-glucose site; these read SF, TK, and ND. The segment at 656–895 is hexokinase large subdomain 2; the sequence is NDTVGTMMTC…CNVSFLLSED (240 aa). Residues D657 and T680 each coordinate D-glucose 6-phosphate. T680 is an ATP binding site. D-glucose-binding positions include 682 to 683, E708, and E742; that span reads SN. ATP contacts are provided by residues 747–748, 784–788, and 863–867; these read GI, TKFLS, and TLYKL. Residues 861–863 and S897 contribute to the D-glucose 6-phosphate site; that span reads DGT.

The protein belongs to the hexokinase family. In terms of assembly, monomer. Interacts with RABL2/RABL2A; binds preferentially to GTP-bound RABL2. Interacts with VDAC1. The HK1-VDAC1 complex interacts with ATF2. Interacts (via N-terminal spermatogenic cell-specific region) with PFKM (via C-terminus). Interacts with SMAD5.

The protein localises to the mitochondrion outer membrane. The protein resides in the cytoplasm. It is found in the cytosol. It catalyses the reaction a D-hexose + ATP = a D-hexose 6-phosphate + ADP + H(+). It carries out the reaction D-fructose + ATP = D-fructose 6-phosphate + ADP + H(+). The enzyme catalyses D-glucose + ATP = D-glucose 6-phosphate + ADP + H(+). The catalysed reaction is D-mannose + ATP = D-mannose 6-phosphate + ADP + H(+). It catalyses the reaction D-glucosamine + ATP = D-glucosamine 6-phosphate + ADP + H(+). Its pathway is carbohydrate metabolism; hexose metabolism. It participates in carbohydrate degradation; glycolysis; D-glyceraldehyde 3-phosphate and glycerone phosphate from D-glucose: step 1/4. With respect to regulation, hexokinase is an allosteric enzyme inhibited by its product D-glucose 6-phosphate. Hexokinase activity is inhibited by N-acetyl-D-glucosamine. Functionally, catalyzes the phosphorylation of various hexoses, such as D-glucose, D-glucosamine, D-fructose, D-mannose and 2-deoxy-D-glucose, to hexose 6-phosphate (D-glucose 6-phosphate, D-glucosamine 6-phosphate, D-fructose 6-phosphate, D-mannose 6-phosphate and 2-deoxy-D-glucose 6-phosphate, respectively). Does not phosphorylate N-acetyl-D-glucosamine. Mediates the initial step of glycolysis by catalyzing phosphorylation of D-glucose to D-glucose 6-phosphate. Involved in innate immunity and inflammation by acting as a pattern recognition receptor for bacterial peptidoglycan. When released in the cytosol, N-acetyl-D-glucosamine component of bacterial peptidoglycan inhibits the hexokinase activity of HK1 and causes its dissociation from mitochondrial outer membrane, thereby activating the NLRP3 inflammasome. In Bos taurus (Bovine), this protein is Hexokinase-1.